A 284-amino-acid polypeptide reads, in one-letter code: D-tagatose-1,6-bisphosphate aldolase subunit GatY (284 aa).

Catalysis depends on Asp82, which acts as the Proton donor. Residues His83 and His180 each coordinate Zn(2+). Gly181 serves as a coordination point for dihydroxyacetone phosphate. Residue His208 coordinates Zn(2+). Residues Gly209–Ser211 and Asn230–Thr233 contribute to the dihydroxyacetone phosphate site.

Belongs to the class II fructose-bisphosphate aldolase family. TagBP aldolase GatY subfamily. Forms a complex with GatZ. Zn(2+) serves as cofactor.

It catalyses the reaction D-tagatofuranose 1,6-bisphosphate = D-glyceraldehyde 3-phosphate + dihydroxyacetone phosphate. Its pathway is carbohydrate metabolism; D-tagatose 6-phosphate degradation; D-glyceraldehyde 3-phosphate and glycerone phosphate from D-tagatose 6-phosphate: step 2/2. In terms of biological role, catalytic subunit of the tagatose-1,6-bisphosphate aldolase GatYZ, which catalyzes the reversible aldol condensation of dihydroxyacetone phosphate (DHAP or glycerone-phosphate) with glyceraldehyde 3-phosphate (G3P) to produce tagatose 1,6-bisphosphate (TBP). Requires GatZ subunit for full activity and stability. Is involved in the catabolism of galactitol. The protein is D-tagatose-1,6-bisphosphate aldolase subunit GatY of Escherichia coli (strain SMS-3-5 / SECEC).